The primary structure comprises 232 residues: LexA repressor (232 aa).

The segment at residues 36 to 56 (IREIGDAAGLQSTSSVAYQLK) is a DNA-binding region (H-T-H motif). A compositionally biased stretch (basic and acidic residues) spans 62-86 (GFLRRDPNKPRAVDVRHLPETDNRT). The interval 62–107 (GFLRRDPNKPRAVDVRHLPETDNRTKAGPKAKARPTAGASPQPELA) is disordered. Catalysis depends on for autocatalytic cleavage activity residues serine 156 and lysine 193.

This sequence belongs to the peptidase S24 family. Homodimer.

It carries out the reaction Hydrolysis of Ala-|-Gly bond in repressor LexA.. Functionally, represses a number of genes involved in the response to DNA damage (SOS response), including recA and lexA. In the presence of single-stranded DNA, RecA interacts with LexA causing an autocatalytic cleavage which disrupts the DNA-binding part of LexA, leading to derepression of the SOS regulon and eventually DNA repair. This chain is LexA repressor, found in Corynebacterium efficiens (strain DSM 44549 / YS-314 / AJ 12310 / JCM 11189 / NBRC 100395).